Here is a 339-residue protein sequence, read N- to C-terminus: UDP-3-O-acylglucosamine N-acyltransferase (339 aa).

Histidine 238 serves as the catalytic Proton acceptor.

Belongs to the transferase hexapeptide repeat family. LpxD subfamily. In terms of assembly, homotrimer.

It catalyses the reaction a UDP-3-O-[(3R)-3-hydroxyacyl]-alpha-D-glucosamine + a (3R)-hydroxyacyl-[ACP] = a UDP-2-N,3-O-bis[(3R)-3-hydroxyacyl]-alpha-D-glucosamine + holo-[ACP] + H(+). Its pathway is bacterial outer membrane biogenesis; LPS lipid A biosynthesis. Functionally, catalyzes the N-acylation of UDP-3-O-acylglucosamine using 3-hydroxyacyl-ACP as the acyl donor. Is involved in the biosynthesis of lipid A, a phosphorylated glycolipid that anchors the lipopolysaccharide to the outer membrane of the cell. The chain is UDP-3-O-acylglucosamine N-acyltransferase from Aeromonas hydrophila subsp. hydrophila (strain ATCC 7966 / DSM 30187 / BCRC 13018 / CCUG 14551 / JCM 1027 / KCTC 2358 / NCIMB 9240 / NCTC 8049).